Reading from the N-terminus, the 135-residue chain is Transcription antitermination protein NusB (135 aa).

It belongs to the NusB family.

In terms of biological role, involved in transcription antitermination. Required for transcription of ribosomal RNA (rRNA) genes. Binds specifically to the boxA antiterminator sequence of the ribosomal RNA (rrn) operons. The protein is Transcription antitermination protein NusB of Bdellovibrio bacteriovorus (strain ATCC 15356 / DSM 50701 / NCIMB 9529 / HD100).